We begin with the raw amino-acid sequence, 2822 residues long: Piezo-type mechanosensitive ion channel component 2 (2822 aa).

The Cytoplasmic segment spans residues 1 to 12 (MASEVVCGLIFR). A helical transmembrane segment spans residues 13 to 24 (LLLPICLAVACA). Over 25–30 (FRYNGL) the chain is Extracellular. Residues 31 to 43 (SFVYLIYLLLIPL) traverse the membrane as a helical segment. At 44–50 (FSEPTKA) the chain is on the cytoplasmic side. The helical transmembrane segment at 51-76 (TMQGHTGRLLQSLCITSLSFLLLHII) threads the bilayer. Residues 77–122 (FHITLASLEAQHRITPAYNCSTWEKTFRQIGFESLKGADAGNGIRV) lie on the Extracellular side of the membrane. Residue N95 is glycosylated (N-linked (GlcNAc...) asparagine). A helical membrane pass occupies residues 123-141 (FVPDIGMFIASLTIWLVCR). Over 142–221 (TIVKKPDTEE…KEFIGNMITT (80 aa)) the chain is Cytoplasmic. Residues 222–237 (AGKVVVTILLGSSGMM) form a helical membrane-spanning segment. At 238-240 (LPS) the chain is on the extracellular side. Residues 241–258 (LTSAVYFFVFLGLCTWWS) form a helical membrane-spanning segment. The Cytoplasmic portion of the chain corresponds to 259-264 (WCRTFD). A helical transmembrane segment spans residues 265 to 287 (PLLFGCLCVLLAIFTAGHLIGLY). The Extracellular segment spans residues 288 to 335 (LYQFQFFQEAVPPNDYYARLFGIKSVIQTDCASTWKIIVNPDLSWYHH). A helical transmembrane segment spans residues 336-355 (ANPILLLVMYYTLATLIRIW). The Cytoplasmic portion of the chain corresponds to 356–492 (LQEPLVQEEM…SVRMHAMVAV (137 aa)). The tract at residues 450 to 481 (YRWEPSEESSEKKEEEEDKREDSEGEGSQEEK) is disordered. Positions 455–482 (SEESSEKKEEEEDKREDSEGEGSQEEKR) form a coiled coil. Positions 463–477 (EEEEDKREDSEGEGS) are enriched in acidic residues. A helical membrane pass occupies residues 493–514 (FQFIMKQSYICALIAMMAWSIT). The Extracellular segment spans residues 515 to 519 (YHSWL). A helical transmembrane segment spans residues 520–531 (TFVLLIWSCTLW). At 532 to 535 (MIRN) the chain is on the cytoplasmic side. A helical membrane pass occupies residues 536–562 (RRKYAMISSPFMVVYANLLLVLQYIWS). Residues 563–583 (FELPEIKKVPGFLEKKEPGEL) are Extracellular-facing. Residues 584-614 (ASKILFTITFWLLLRQHLTEQKALREKEALL) traverse the membrane as a helical segment. Residues 615 to 689 (SEVKIGSQEL…GNLVVALFIK (75 aa)) lie on the Cytoplasmic side of the membrane. 2 stretches are compositionally biased toward acidic residues: residues 624-633 (LEEKEDEELQ) and 643-652 (EKEEEEEEEI). Residues 624–668 (LEEKEDEELQDVQVEGEPTEKEEEEEEEIKEERHEVKKEEEEEVE) are disordered. Over residues 653–662 (KEERHEVKKE) the composition is skewed to basic and acidic residues. Residues 690–703 (YWIYVCGGMFFFVS) traverse the membrane as a helical segment. At 704–709 (FEGKIV) the chain is on the extracellular side. The chain crosses the membrane as a helical span at residues 710-728 (MYKIIYMVLFLFCVALYQV). The Cytoplasmic portion of the chain corresponds to 729 to 737 (HYEWWRKIL). The chain crosses the membrane as a helical span at residues 738 to 757 (KYFWMSVVIYTMLVLIFIYT). Topologically, residues 758 to 789 (YQFENFPGLWQNMTGLKKEKLEDLGLKQFTVA) are extracellular. A helical membrane pass occupies residues 790 to 811 (ELFTRIFIPTSFLLVCILHLHY). Residues 812-957 (FHDRFLELTD…QVFMWWILEL (146 aa)) are Cytoplasmic-facing. Phosphoserine is present on S856. The span at 875 to 901 (QKLAESGEERPEECVKKTEKGEAGKDS) shows a compositional bias: basic and acidic residues. The disordered stretch occupies residues 875–919 (QKLAESGEERPEECVKKTEKGEAGKDSDESEEEEDEEEESEEEES). Acidic residues predominate over residues 902–919 (DESEEEEDEEEESEEEES). Residues 958 to 973 (HIIKIVSSYIIWVTVK) form a helical membrane-spanning segment. Over 974–979 (EVSLFN) the chain is Extracellular. The chain crosses the membrane as a helical span at residues 980–989 (YVFLISWAFA). Over 990–997 (LPYAKLRR) the chain is Cytoplasmic. The helical transmembrane segment at 998 to 1018 (AASSVCTVWTCVIIVCKMLYQ) threads the bilayer. At 1019–1074 (LQTIKPENFSVNCSLPNENQTNIPLHELNKSLLYSAPVDPTEWVGLRKSSPLLVYL) the chain is on the extracellular side. An N-linked (GlcNAc...) asparagine glycan is attached at N1030. C1031 and C1209 are oxidised to a cystine. Residues 1075-1099 (RNNLLMLAILAFEVTVYRHQEYYRG) form a helical membrane-spanning segment. Residues 1100–1140 (RNNLTAPVSKTIFHDITRLHLDDGLINCAKYFVNYFFYKFG) are Cytoplasmic-facing. The chain crosses the membrane as a helical span at residues 1141 to 1155 (LETCFLMSVNVIGQR). Residues 1156-1157 (MD) lie on the Extracellular side of the membrane. The helical transmembrane segment at 1158-1171 (FYAMIHACWLIGVL) threads the bilayer. Over 1172–1182 (YRRRRKAIAEV) the chain is Cytoplasmic. A helical transmembrane segment spans residues 1183 to 1202 (WPKYCCFLACIITFQYFVCI). Topologically, residues 1203–1239 (GIPPAPCRDYPWRFKGAYFNDNIIKWLYFPDFIVRPN) are extracellular. The helical transmembrane segment at 1240–1260 (PVFLVYDFMLLLCASLQRQIF) threads the bilayer. Residues 1261–1314 (EDENKAAVRIMAGDNVEICMNLDAASFSQHNPVPDFIHCRSYLDMSKVIIFSYL) are Cytoplasmic-facing. A helical membrane pass occupies residues 1315-1327 (FWFVLTIIFITGT). Over 1328 to 1333 (TRISIF) the chain is Extracellular. Residues 1334 to 1346 (CMGYLVACFYFLL) traverse the membrane as a helical segment. Residues 1347-1355 (FGGDLLLKP) are Cytoplasmic-facing. The chain crosses the membrane as a helical span at residues 1356 to 1381 (IKSILRYWDWLIAYNVFVITMKNILS). The Extracellular portion of the chain corresponds to 1382–1430 (IGACGYIGALVRNSCWLIQAFSLACTVKGYQMPEDDSRCKLPSGEAGII). Residues 1431–1447 (WDSICFAFLLLQRRVFM) traverse the membrane as a helical segment. At 1448-1991 (SYYFLHVVAD…YAMYNTLVAR (544 aa)) the chain is on the cytoplasmic side. The stretch at 1475–1515 (TIVKAVKARIEEEKKSMDQLKRQMDRIKARQQKYKKGKERM) forms a coiled coil. Disordered stretches follow at residues 1505–1551 (QQKY…KKKQ) and 1611–1653 (LRQR…KKSD). A compositionally biased stretch (basic residues) spans 1611–1621 (LRQRRKEKKKL). Positions 1622–1633 (AREEQKERRKGS) are enriched in basic and acidic residues. The chain crosses the membrane as a helical span at residues 1992 to 2006 (SEMVCYFVIILNHMT). Residues 2007-2013 (SASIITL) lie on the Extracellular side of the membrane. Residues 2014–2025 (LLPILIFLWAML) form a helical membrane-spanning segment. Over 2026 to 2031 (SVPRPS) the chain is Cytoplasmic. The helical transmembrane segment at 2032–2053 (RRFWMMAIVYTEVAIVVKYFFQ) threads the bilayer. Over 2054 to 2086 (FGFFPWNKDLEIYKERPYFPPNIIGVEKKEGYV) the chain is Extracellular. A helical membrane pass occupies residues 2087 to 2105 (LYDLIQLLALFFHRSILKC). Residues 2106 to 2259 (HGLWDEDDIV…HPDYSAVTDV (154 aa)) are Cytoplasmic-facing. 2 disordered regions span residues 2120 to 2139 (DKEG…GSSD) and 2164 to 2205 (IRRK…SVLS). Residues 2170-2197 (CSSSQISPRSSFSSNRSKRGSTSTRNSS) are compositionally biased toward low complexity. Residues 2260 to 2279 (YVLMFLADTVDFIIIVFGFW) traverse the membrane as a helical segment. Over 2280–2301 (AFGKHSAAADITSSLSEDQVPG) the chain is Extracellular. A helical transmembrane segment spans residues 2302–2322 (PFLVMVLIQFGTMVVDRALYL). The Cytoplasmic segment spans residues 2323-2326 (RKTV). The chain crosses the membrane as a helical span at residues 2327-2350 (LGKVIFQVILVFGIHFWMFFILPG). The Extracellular portion of the chain corresponds to 2351-2359 (VTERKFSQN). The helical transmembrane segment at 2360–2382 (LVAQLWYFVKCVYFGLSAYQIRC) threads the bilayer. Residues 2383-2467 (GYPTRVLGNF…YPQPRGQKKK (85 aa)) are Cytoplasmic-facing. A helical membrane pass occupies residues 2468 to 2491 (KAVKYGMGGMIIVLLICIVWFPLL). At 2492-2739 (FMSLIKSVAG…PSLGFLAGYG (248 aa)) the chain is on the extracellular side. Residue N2692 is glycosylated (N-linked (GlcNAc...) asparagine). Residues 2740–2760 (IMGLYASVVLVIGKFVREFFS) traverse the membrane as a helical segment. The Cytoplasmic segment spans residues 2761-2822 (GISHSIMFEE…MIKWTREKTN (62 aa)).

The protein belongs to the PIEZO (TC 1.A.75) family. Homotrimer; the homotrimer forms a propeller-shaped Piezo channel with a cation-ion conducting pore. Heterotrimeric interaction may occur between PIEZO1 and PIEZO2. Interacts with STOM13. Interacts with TMC7; the interaction inhibits PIEZO2-conducted mechanically activated currents. Interacts with TMC1; the interaction may be part of the MET complex. Interacts with MDFIC (via C-terminus); the interaction prolongs Piezo channel inactivation. Interacts with MDFI (via C-terminus); the interaction prolongs Piezo channel inactivation. As to expression, expressed in bladder, colon, and lung, but less abundant in kidney or skin. Strong expression is observed in dorsal root ganglia (DRG) sensory neurons. Expressed in a wide range of cutaneous low-threshold mechanoreceptors (LTMRs), including Merkel cells and Meissner's corpuscles. Expressed in sensory neurons. Expressed in cochlear inner and outer hair cells and vestibular organ hair cells. Expressed in pulmonary neuroepithelial cell bodies. Expressed in bladder urothelium and sensory neurons of the lower urinary tract. Expressed in sensory endings of proprioceptors innervating muscle spindles and Golgi tendon organs.

The protein localises to the cell membrane. It catalyses the reaction Ca(2+)(in) = Ca(2+)(out). With respect to regulation, regulated by auxillary subunits MDFIC and MDFI. Channel activity is inhibited by TMEM120aa. Phosphatidic acid and lysophosphatidic acid inhibit Piezo2 channel activity. Pore-forming subunit of the mechanosensitive non-specific cation Piezo channel required for rapidly adapting mechanically activated (MA) currents and has a key role in sensing touch and tactile pain. Piezo channels are homotrimeric three-blade propeller-shaped structures that utilize a cap-motion and plug-and-latch mechanism to gate their ion-conducting pathways. Expressed in sensory neurons, is essential for diverse physiological processes, including respiratory control, systemic metabolism, urinary function, and proprioception. Mediates airway stretch sensing, enabling efficient respiration at birth and maintaining normal breathing in adults. It regulates brown and beige adipose tissue morphology and function, preventing systemic hypermetabolism. In the lower urinary tract, acts as a sensor in both the bladder urothelium and innervating sensory neurons and is required for bladder-stretch sensing and urethral micturition reflexes, ensuring proper urinary function. Additionally, Piezo2 serves as the principal mechanotransducer in proprioceptors, facilitating proprioception and coordinated body movements. In inner ear hair cells, PIEZO1/2 subunits may constitute part of the mechanotransducer (MET) non-selective cation channel complex where they may act as pore-forming ion-conducting component in the complex. Required for Merkel-cell mechanotransduction. Plays a major role in light-touch mechanosensation. The chain is Piezo-type mechanosensitive ion channel component 2 from Mus musculus (Mouse).